Here is a 332-residue protein sequence, read N- to C-terminus: Nucleoid-associated protein VVA0877 (332 aa).

Belongs to the YejK family.

Its subcellular location is the cytoplasm. It localises to the nucleoid. The sequence is that of Nucleoid-associated protein VVA0877 from Vibrio vulnificus (strain YJ016).